Here is a 463-residue protein sequence, read N- to C-terminus: HEPACAM family member 2 (463 aa).

A signal peptide spans Met-1–Gly-32. N-linked (GlcNAc...) asparagine glycans are attached at residues Asn-86, Asn-130, and Asn-166. 2 Ig-like C2-type domains span residues Pro-150–Ile-234 and Pro-236–Thr-332. 2 disulfides stabilise this stretch: Cys-171/Cys-220 and Cys-271/Cys-316. An N-linked (GlcNAc...) asparagine glycan is attached at Asn-321. The helical transmembrane segment at Leu-353–Trp-373 threads the bilayer. Residues Lys-374 to Glu-463 are Cytoplasmic-facing.

Poly-ADP-ribosylated (PARsylated) by tankyrase TNKS during late G2 and prophase, leading to translocation to mitotic centrosomes. In terms of processing, N-glycosylated.

Its subcellular location is the golgi apparatus membrane. The protein localises to the cytoplasm. It localises to the cytoskeleton. It is found in the spindle. The protein resides in the microtubule organizing center. Its subcellular location is the centrosome. The protein localises to the midbody. Its function is as follows. Required during prometaphase for centrosome maturation. Following poly-ADP-ribosylation (PARsylation) by TNKS, translocates from the Golgi apparatus to mitotic centrosomes and plays a key role in the formation of robust microtubules for prompt movement of chromosomes: anchors AKAP9/CG-NAP, a scaffold protein of the gamma-tubulin ring complex and promotes centrosome maturation. This is HEPACAM family member 2 (Hepacam2) from Mus musculus (Mouse).